Reading from the N-terminus, the 520-residue chain is AarF domain-containing protein kinase 1 (520 aa).

The region spanning 148–455 is the Protein kinase domain; sequence EFEKTPLGAA…GTHSSSSAFF (308 aa). Residues 154 to 162 and Lys176 each bind ATP; that span reads LGAASLAQV. The Proton acceptor role is filled by Asp308.

The protein belongs to the protein kinase superfamily. ADCK protein kinase family.

It localises to the mitochondrion. Appears to be essential for maintaining mitochondrial cristae formation and mitochondrial function by acting via YME1L1 in a kinase-independent manner to regulate essential mitochondrial structural proteins OPA1 and IMMT. The action of this enzyme is not yet clear. It is not known if it has protein kinase activity and what type of substrate it would phosphorylate (Ser, Thr or Tyr). This Xenopus laevis (African clawed frog) protein is AarF domain-containing protein kinase 1 (adck1).